We begin with the raw amino-acid sequence, 189 residues long: uncharacterized protein (189 aa).

This sequence belongs to the inositol monophosphatase superfamily.

This is an uncharacterized protein from Leptospira biflexa.